A 694-amino-acid chain; its full sequence is DNA primase (694 aa).

Residues 41-65 (CPFHDDKSPSFTVSPAKQFYYCFSC) form a CHC2-type zinc finger. A Toprim domain is found at 265 to 348 (DQAVVVEGYF…QGQVQLRVLN (84 aa)). Residues glutamate 271, aspartate 317, and aspartate 319 each contribute to the Mg(2+) site.

Belongs to the DnaG primase family. Monomer. Interacts with DnaB. Zn(2+) is required as a cofactor. Mg(2+) serves as cofactor.

It catalyses the reaction ssDNA + n NTP = ssDNA/pppN(pN)n-1 hybrid + (n-1) diphosphate.. RNA polymerase that catalyzes the synthesis of short RNA molecules used as primers for DNA polymerase during DNA replication. In Synechococcus elongatus (strain ATCC 33912 / PCC 7942 / FACHB-805) (Anacystis nidulans R2), this protein is DNA primase.